The following is a 371-amino-acid chain: Histidinol-phosphate aminotransferase (371 aa).

Position 228 is an N6-(pyridoxal phosphate)lysine (lysine 228).

This sequence belongs to the class-II pyridoxal-phosphate-dependent aminotransferase family. Histidinol-phosphate aminotransferase subfamily. The cofactor is pyridoxal 5'-phosphate.

It carries out the reaction L-histidinol phosphate + 2-oxoglutarate = 3-(imidazol-4-yl)-2-oxopropyl phosphate + L-glutamate. It participates in amino-acid biosynthesis; L-histidine biosynthesis; L-histidine from 5-phospho-alpha-D-ribose 1-diphosphate: step 7/9. In Methanococcus maripaludis (strain C6 / ATCC BAA-1332), this protein is Histidinol-phosphate aminotransferase.